The following is a 166-amino-acid chain: NAD(P)H-quinone oxidoreductase subunit I, chloroplastic (166 aa).

4Fe-4S ferredoxin-type domains are found at residues 55 to 84 and 95 to 124; these read GRIH…VDWK and LNYS…MTEE. Cys64, Cys67, Cys70, Cys74, Cys104, Cys107, Cys110, and Cys114 together coordinate [4Fe-4S] cluster.

The protein belongs to the complex I 23 kDa subunit family. As to quaternary structure, NDH is composed of at least 16 different subunits, 5 of which are encoded in the nucleus. Requires [4Fe-4S] cluster as cofactor.

The protein resides in the plastid. It is found in the chloroplast thylakoid membrane. The enzyme catalyses a plastoquinone + NADH + (n+1) H(+)(in) = a plastoquinol + NAD(+) + n H(+)(out). It catalyses the reaction a plastoquinone + NADPH + (n+1) H(+)(in) = a plastoquinol + NADP(+) + n H(+)(out). In terms of biological role, NDH shuttles electrons from NAD(P)H:plastoquinone, via FMN and iron-sulfur (Fe-S) centers, to quinones in the photosynthetic chain and possibly in a chloroplast respiratory chain. The immediate electron acceptor for the enzyme in this species is believed to be plastoquinone. Couples the redox reaction to proton translocation, and thus conserves the redox energy in a proton gradient. This is NAD(P)H-quinone oxidoreductase subunit I, chloroplastic from Sigesbeckia blakei.